Consider the following 193-residue polypeptide: UPF0301 protein SAV_5129 (193 aa).

This sequence belongs to the UPF0301 (AlgH) family.

This is UPF0301 protein SAV_5129 from Streptomyces avermitilis (strain ATCC 31267 / DSM 46492 / JCM 5070 / NBRC 14893 / NCIMB 12804 / NRRL 8165 / MA-4680).